Reading from the N-terminus, the 709-residue chain is Polyribonucleotide nucleotidyltransferase (709 aa).

2 residues coordinate Mg(2+): D486 and D492. Positions 553 to 612 (PRIHTIKINPDKIKDVIGKGGSVIRALTEETGTTIEIEDDGTVKIAATDGEKAKHAISRI) constitute a KH domain. The region spanning 622–690 (GRIYAGKVTR…RQGRVRLSIK (69 aa)) is the S1 motif domain.

This sequence belongs to the polyribonucleotide nucleotidyltransferase family. In terms of assembly, component of the RNA degradosome, which is a multiprotein complex involved in RNA processing and mRNA degradation. Requires Mg(2+) as cofactor.

The protein localises to the cytoplasm. It carries out the reaction RNA(n+1) + phosphate = RNA(n) + a ribonucleoside 5'-diphosphate. Functionally, involved in mRNA degradation. Catalyzes the phosphorolysis of single-stranded polyribonucleotides processively in the 3'- to 5'-direction. This chain is Polyribonucleotide nucleotidyltransferase, found in Photorhabdus luminescens (Xenorhabdus luminescens).